The sequence spans 211 residues: Urease accessory protein UreG (211 aa).

13–20 contacts GTP; it reads GPVGSGKT.

Belongs to the SIMIBI class G3E GTPase family. UreG subfamily. Homodimer. UreD, UreF and UreG form a complex that acts as a GTP-hydrolysis-dependent molecular chaperone, activating the urease apoprotein by helping to assemble the nickel containing metallocenter of UreC. The UreE protein probably delivers the nickel.

Its subcellular location is the cytoplasm. Functionally, facilitates the functional incorporation of the urease nickel metallocenter. This process requires GTP hydrolysis, probably effectuated by UreG. The chain is Urease accessory protein UreG from Alkalilimnicola ehrlichii (strain ATCC BAA-1101 / DSM 17681 / MLHE-1).